Here is a 599-residue protein sequence, read N- to C-terminus: Elongation factor 4 (599 aa).

One can recognise a tr-type G domain in the interval E2–K185. GTP is bound by residues D14–T19 and N132–D135.

Belongs to the TRAFAC class translation factor GTPase superfamily. Classic translation factor GTPase family. LepA subfamily.

The protein resides in the cell inner membrane. It carries out the reaction GTP + H2O = GDP + phosphate + H(+). Required for accurate and efficient protein synthesis under certain stress conditions. May act as a fidelity factor of the translation reaction, by catalyzing a one-codon backward translocation of tRNAs on improperly translocated ribosomes. Back-translocation proceeds from a post-translocation (POST) complex to a pre-translocation (PRE) complex, thus giving elongation factor G a second chance to translocate the tRNAs correctly. Binds to ribosomes in a GTP-dependent manner. The protein is Elongation factor 4 of Hydrogenobaculum sp. (strain Y04AAS1).